The chain runs to 252 residues: Protein A47 (252 aa).

It belongs to the orthopoxvirus A47 protein family.

The polypeptide is Protein A47 (Vaccinia virus (strain Western Reserve) (VACV)).